The chain runs to 876 residues: Alanine--tRNA ligase (876 aa).

The Zn(2+) site is built by His565, His569, Cys667, and His671.

It belongs to the class-II aminoacyl-tRNA synthetase family. Requires Zn(2+) as cofactor.

It is found in the cytoplasm. It carries out the reaction tRNA(Ala) + L-alanine + ATP = L-alanyl-tRNA(Ala) + AMP + diphosphate. Its function is as follows. Catalyzes the attachment of alanine to tRNA(Ala) in a two-step reaction: alanine is first activated by ATP to form Ala-AMP and then transferred to the acceptor end of tRNA(Ala). Also edits incorrectly charged Ser-tRNA(Ala) and Gly-tRNA(Ala) via its editing domain. The protein is Alanine--tRNA ligase of Staphylococcus aureus (strain Mu3 / ATCC 700698).